The primary structure comprises 943 residues: Serine/threonine-protein kinase ATG1 (943 aa).

Positions 22–327 (FVIDKEIGKG…FEDFFHHPVI (306 aa)) constitute a Protein kinase domain. Residues 28–36 (IGKGSFAQV) and K51 each bind ATP. Residue D165 is the Proton acceptor of the active site. Disordered stretches follow at residues 334–468 (LVED…LTDE), 503–561 (QQGQ…SPGA), 774–800 (LPEE…GGQA), 858–888 (HLPK…SDDK), and 914–943 (AASK…SVPT). A compositionally biased stretch (basic and acidic residues) spans 338–352 (DIPKPEKPVLAETKS). The span at 517–529 (ATQQGHPTSTTGA) shows a compositional bias: polar residues. The span at 542–554 (RNDHYRKASHDKT) shows a compositional bias: basic and acidic residues. A compositionally biased stretch (low complexity) spans 919–928 (QQQQQQQQVV).

Belongs to the protein kinase superfamily. Ser/Thr protein kinase family. APG1/unc-51/ULK1 subfamily. In terms of assembly, homodimer. Forms a ternary complex with ATG13 and ATG17.

It is found in the cytoplasm. It localises to the preautophagosomal structure membrane. The catalysed reaction is L-seryl-[protein] + ATP = O-phospho-L-seryl-[protein] + ADP + H(+). It catalyses the reaction L-threonyl-[protein] + ATP = O-phospho-L-threonyl-[protein] + ADP + H(+). Functionally, serine/threonine protein kinase involved in the cytoplasm to vacuole transport (Cvt) and found to be essential in autophagy, where it is required for the formation of autophagosomes. Involved in the clearance of protein aggregates which cannot be efficiently cleared by the proteasome. Required for selective autophagic degradation of the nucleus (nucleophagy) as well as for mitophagy which contributes to regulate mitochondrial quantity and quality by eliminating the mitochondria to a basal level to fulfill cellular energy requirements and preventing excess ROS production. Also involved in endoplasmic reticulum-specific autophagic process, in selective removal of ER-associated degradation (ERAD) substrates. Plays a key role in ATG9 and ATG23 cycling through the pre-autophagosomal structure and is necessary to promote ATG18 binding to ATG9 through phosphorylation of ATG9. Catalyzes phosphorylation of ATG4, decreasing the interaction between ATG4 and ATG8 and impairing deconjugation of PE-conjugated forms of ATG8. The chain is Serine/threonine-protein kinase ATG1 from Chaetomium globosum (strain ATCC 6205 / CBS 148.51 / DSM 1962 / NBRC 6347 / NRRL 1970) (Soil fungus).